Consider the following 214-residue polypeptide: Ras-like protein rasZ (214 aa).

16-23 (GDGGVGKT) is a binding site for GTP. Positions 38 to 46 (YDPTIEDSY) match the Effector region motif. GTP contacts are provided by residues 63–67 (DTAGQ) and 122–125 (NKSD). Position 211 is a cysteine methyl ester (Cys-211). The S-geranylgeranyl cysteine moiety is linked to residue Cys-211. Residues 212-214 (KMM) constitute a propeptide, removed in mature form.

The protein belongs to the small GTPase superfamily. Ras family.

It is found in the cell membrane. It carries out the reaction GTP + H2O = GDP + phosphate + H(+). Ras proteins bind GDP/GTP and possess intrinsic GTPase activity. This is Ras-like protein rasZ (rasZ) from Dictyostelium discoideum (Social amoeba).